Consider the following 334-residue polypeptide: Methionine import ATP-binding protein MetN (334 aa).

The ABC transporter domain maps to 7 to 246 (VEFRSVSKVF…PRSAPARAFV (240 aa)). 43 to 50 (GYSGAGKS) contributes to the ATP binding site.

Belongs to the ABC transporter superfamily. Methionine importer (TC 3.A.1.24) family. In terms of assembly, the complex is composed of two ATP-binding proteins (MetN), two transmembrane proteins (MetI) and a solute-binding protein (MetQ).

The protein resides in the cell membrane. The enzyme catalyses L-methionine(out) + ATP + H2O = L-methionine(in) + ADP + phosphate + H(+). It carries out the reaction D-methionine(out) + ATP + H2O = D-methionine(in) + ADP + phosphate + H(+). In terms of biological role, part of the ABC transporter complex MetNIQ involved in methionine import. Responsible for energy coupling to the transport system. This is Methionine import ATP-binding protein MetN from Nocardia farcinica (strain IFM 10152).